The following is a 167-amino-acid chain: NAD(P)H-quinone oxidoreductase subunit J (167 aa).

Belongs to the complex I 30 kDa subunit family. NDH-1 can be composed of about 15 different subunits; different subcomplexes with different compositions have been identified which probably have different functions.

It is found in the cellular thylakoid membrane. The catalysed reaction is a plastoquinone + NADH + (n+1) H(+)(in) = a plastoquinol + NAD(+) + n H(+)(out). The enzyme catalyses a plastoquinone + NADPH + (n+1) H(+)(in) = a plastoquinol + NADP(+) + n H(+)(out). NDH-1 shuttles electrons from an unknown electron donor, via FMN and iron-sulfur (Fe-S) centers, to quinones in the respiratory and/or the photosynthetic chain. The immediate electron acceptor for the enzyme in this species is believed to be plastoquinone. Couples the redox reaction to proton translocation, and thus conserves the redox energy in a proton gradient. Cyanobacterial NDH-1 also plays a role in inorganic carbon-concentration. The sequence is that of NAD(P)H-quinone oxidoreductase subunit J from Microcystis aeruginosa (strain NIES-843 / IAM M-2473).